The sequence spans 740 residues: E3 ubiquitin-protein ligase TRIM9 (740 aa).

The RING-type; degenerate zinc-finger motif lies at Cys-7 to Cys-30. The segment covering Gly-64 to Ala-73 has biased composition (gly residues). A disordered region spans residues Gly-64–Asp-114. Positions Ala-74–Ser-105 are enriched in low complexity. The B box-type 1; atypical zinc-finger motif lies at Arg-195–Pro-244. Residues Cys-200, Cys-203, Cys-225, His-230, Cys-255, His-258, Cys-277, and His-283 each coordinate Zn(2+). The segment at Gln-250–Ile-291 adopts a B box-type 2 zinc-finger fold. The stretch at Thr-294–Lys-324 forms a coiled coil. Residues Leu-399 to Ile-459 form the COS domain. Residues Ala-474–Val-567 enclose the Fibronectin type-III domain. The 188-residue stretch at Asn-549–Lys-736 folds into the B30.2/SPRY domain.

The protein belongs to the TRIM/RBCC family. In terms of assembly, interacts (via fibronectin type-III domain) with pico. Interacts (via SPRY domain) with netrin receptor fra.

Its subcellular location is the cell projection. It is found in the axon. The protein localises to the perikaryon. The enzyme catalyses S-ubiquitinyl-[E2 ubiquitin-conjugating enzyme]-L-cysteine + [acceptor protein]-L-lysine = [E2 ubiquitin-conjugating enzyme]-L-cysteine + N(6)-ubiquitinyl-[acceptor protein]-L-lysine.. Its pathway is protein modification; protein ubiquitination. E3 ubiquitin-protein ligase activity. During embryonic and larval development, regulates the pattern of axonal projections of class IV nociceptive sensory neurons (C4da) downstream of netrin receptor fra. Regulates fine-scale topography of C4da axon terminals upon neuronal activity. During eye development, consolidates the attachment of R8 photoreceptor growth cones to the target medulla layer, probably downstream of fra. The chain is E3 ubiquitin-protein ligase TRIM9 from Drosophila melanogaster (Fruit fly).